Reading from the N-terminus, the 106-residue chain is MAEPWAGQFLQALPATVLGALGTLGSEFLREWETQDMRVTLFKLLLLWLVLSLLGIQLAWGFYGNTVTGLYHRPGLGGQNGSTPDGSTHFPSWEMAANEALKTHRE.

N-acetylalanine is present on Ala-2. At 2–8 the chain is on the extracellular side; that stretch reads AEPWAGQ. A helical transmembrane segment spans residues 9–29; that stretch reads FLQALPATVLGALGTLGSEFL. Over 30-43 the chain is Cytoplasmic; that stretch reads REWETQDMRVTLFK. A helical membrane pass occupies residues 44–64; the sequence is LLLLWLVLSLLGIQLAWGFYG. The Extracellular portion of the chain corresponds to 65 to 106; the sequence is NTVTGLYHRPGLGGQNGSTPDGSTHFPSWEMAANEALKTHRE. Asn-80 carries N-linked (GlcNAc...) asparagine glycosylation.

It belongs to the TCTA family.

The protein localises to the membrane. In terms of biological role, may be required for cellular fusion during osteoclastogenesis. The polypeptide is T-cell leukemia translocation-altered gene protein homolog (Tcta) (Rattus norvegicus (Rat)).